A 122-amino-acid chain; its full sequence is UPF0102 protein RHECIAT_CH0000358 (122 aa).

Belongs to the UPF0102 family.

The polypeptide is UPF0102 protein RHECIAT_CH0000358 (Rhizobium etli (strain CIAT 652)).